A 610-amino-acid polypeptide reads, in one-letter code: Elongation factor 4 (610 aa).

In terms of domain architecture, tr-type G spans 11-193 (EKIRNFSIIA…QIVEKVPAPT (183 aa)). GTP is bound by residues 23–28 (DHGKST) and 140–143 (NKID).

The protein belongs to the TRAFAC class translation factor GTPase superfamily. Classic translation factor GTPase family. LepA subfamily.

The protein localises to the cell membrane. It catalyses the reaction GTP + H2O = GDP + phosphate + H(+). In terms of biological role, required for accurate and efficient protein synthesis under certain stress conditions. May act as a fidelity factor of the translation reaction, by catalyzing a one-codon backward translocation of tRNAs on improperly translocated ribosomes. Back-translocation proceeds from a post-translocation (POST) complex to a pre-translocation (PRE) complex, thus giving elongation factor G a second chance to translocate the tRNAs correctly. Binds to ribosomes in a GTP-dependent manner. The sequence is that of Elongation factor 4 from Streptococcus agalactiae serotype Ia (strain ATCC 27591 / A909 / CDC SS700).